Reading from the N-terminus, the 456-residue chain is tRNA modification GTPase MnmE (456 aa).

(6S)-5-formyl-5,6,7,8-tetrahydrofolate-binding residues include arginine 23, glutamate 85, and arginine 124. The 156-residue stretch at 220–375 (GLRVLIFGKP…LVSAIQERFV (156 aa)) folds into the TrmE-type G domain. Asparagine 230 contributes to the K(+) binding site. GTP contacts are provided by residues 230–235 (NVGKSS), 249–255 (TDIPGTT), and 274–277 (DTAG). A Mg(2+)-binding site is contributed by serine 234. 3 residues coordinate K(+): threonine 249, isoleucine 251, and threonine 254. Threonine 255 contacts Mg(2+). Residue lysine 456 participates in (6S)-5-formyl-5,6,7,8-tetrahydrofolate binding.

This sequence belongs to the TRAFAC class TrmE-Era-EngA-EngB-Septin-like GTPase superfamily. TrmE GTPase family. As to quaternary structure, homodimer. Heterotetramer of two MnmE and two MnmG subunits. It depends on K(+) as a cofactor.

It is found in the cytoplasm. In terms of biological role, exhibits a very high intrinsic GTPase hydrolysis rate. Involved in the addition of a carboxymethylaminomethyl (cmnm) group at the wobble position (U34) of certain tRNAs, forming tRNA-cmnm(5)s(2)U34. The polypeptide is tRNA modification GTPase MnmE (Syntrophotalea carbinolica (strain DSM 2380 / NBRC 103641 / GraBd1) (Pelobacter carbinolicus)).